The primary structure comprises 250 residues: Enoyl-[acyl-carrier-protein] reductase [NADPH] FabL (250 aa).

Residues 13-16 (SRGV), 36-38 (ARS), 62-63 (NV), and Asn89 each bind NADP(+). Residues Tyr151 and Lys158 each act as proton acceptor in the active site. Residues Lys158 and 187-189 (IDT) contribute to the NADP(+) site.

Belongs to the short-chain dehydrogenases/reductases (SDR) family. In terms of assembly, homotetramer.

The catalysed reaction is a 2,3-saturated acyl-[ACP] + NADP(+) = a (2E)-enoyl-[ACP] + NADPH + H(+). It carries out the reaction (2E)-butenoyl-[ACP] + NADPH + H(+) = butanoyl-[ACP] + NADP(+). It functions in the pathway lipid metabolism; fatty acid biosynthesis. Inhibited by triclosan. Catalyzes the reduction of a carbon-carbon double bond in an enoyl moiety that is covalently linked to an acyl carrier protein (ACP). It confers resistance to triclosan. The protein is Enoyl-[acyl-carrier-protein] reductase [NADPH] FabL (fabL) of Bacillus subtilis (strain 168).